The following is a 433-amino-acid chain: Pyrimidine-nucleoside phosphorylase (433 aa).

81-83 (KHS) contributes to the phosphate binding site. K(+) is bound by residues glycine 88 and threonine 90. Phosphate is bound by residues threonine 92, 108–110 (KMS), and threonine 120. Residues arginine 168 and lysine 187 each contribute to the substrate site. Positions 243, 246, and 255 each coordinate K(+).

This sequence belongs to the thymidine/pyrimidine-nucleoside phosphorylase family. Homodimer. K(+) serves as cofactor.

The catalysed reaction is uridine + phosphate = alpha-D-ribose 1-phosphate + uracil. It catalyses the reaction thymidine + phosphate = 2-deoxy-alpha-D-ribose 1-phosphate + thymine. The enzyme catalyses 2'-deoxyuridine + phosphate = 2-deoxy-alpha-D-ribose 1-phosphate + uracil. Functionally, catalyzes phosphorolysis of the pyrimidine nucleosides uridine, thymidine and 2'-deoxyuridine with the formation of the corresponding pyrimidine base and ribose-1-phosphate. In Geobacillus stearothermophilus (Bacillus stearothermophilus), this protein is Pyrimidine-nucleoside phosphorylase (pdp).